A 344-amino-acid polypeptide reads, in one-letter code: Dihydroorotate dehydrogenase (quinone) (344 aa).

FMN is bound by residues Ala-64–Lys-68 and Thr-88. A substrate-binding site is contributed by Lys-68. Asn-113–Phe-117 lines the substrate pocket. FMN is bound by residues Asn-144 and Asn-177. Asn-177 contacts substrate. Catalysis depends on Ser-180, which acts as the Nucleophile. Asn-182 is a substrate binding site. Residues Lys-222 and Thr-250 each coordinate FMN. Asn-251 to Thr-252 serves as a coordination point for substrate. Residues Gly-273, Gly-302, and Tyr-323–Ser-324 each bind FMN.

The protein belongs to the dihydroorotate dehydrogenase family. Type 2 subfamily. Monomer. FMN is required as a cofactor.

The protein localises to the cell membrane. It carries out the reaction (S)-dihydroorotate + a quinone = orotate + a quinol. It functions in the pathway pyrimidine metabolism; UMP biosynthesis via de novo pathway; orotate from (S)-dihydroorotate (quinone route): step 1/1. Functionally, catalyzes the conversion of dihydroorotate to orotate with quinone as electron acceptor. The sequence is that of Dihydroorotate dehydrogenase (quinone) from Polynucleobacter asymbioticus (strain DSM 18221 / CIP 109841 / QLW-P1DMWA-1) (Polynucleobacter necessarius subsp. asymbioticus).